A 142-amino-acid chain; its full sequence is Transcriptional regulator MraZ (142 aa).

SpoVT-AbrB domains are found at residues 5 to 51 and 77 to 120; these read ASSL…PRNE and AMDV…DAAT.

The protein belongs to the MraZ family. In terms of assembly, forms oligomers.

The protein localises to the cytoplasm. It localises to the nucleoid. This is Transcriptional regulator MraZ from Polaromonas sp. (strain JS666 / ATCC BAA-500).